A 1248-amino-acid polypeptide reads, in one-letter code: Ankyrin repeat and sterile alpha motif domain-containing protein 1B (1248 aa).

ANK repeat units follow at residues 2 to 31 (GKDQELLEAARTGNVALVEKLLSGRKGGIL), 58 to 87 (SGYTALHHAALNGHKDIVLKLLQYEASTNV), 91 to 120 (KGYFPIHLAAWKGDVEIVKILIHHGPSHSR), 127 to 156 (ENETALHCAAQYGHSEVVAVLLEELTDPTI), 160 to 189 (KLETPLDLAALYGRLRVVKMIISAHPNLMS), 193 to 222 (RKHTPLHLAARNGHKAVVQVLLEAGMDVSC), and 225 to 254 (EKGSALHEAALFGKVDVVRVLLETGIDANI). Positions 296–322 (EPVQEDATQETHISSPVESPSQKTKSE) are disordered. Positions 305–322 (ETHISSPVESPSQKTKSE) are enriched in polar residues. Phosphoserine is present on residues S309, S310, S314, S353, and S364. Disordered regions lie at residues 367–400 (ELGKNGSQSVRTSSTINLSPGEVEEEDDDENTCG), 474–514 (APSP…PDTA), and 558–623 (SFTA…ENPF). The span at 371–384 (NGSQSVRTSSTINL) shows a compositional bias: polar residues. Residues 388–397 (EVEEEDDDEN) are compositionally biased toward acidic residues. The residue at position 503 (T503) is a Phosphothreonine. Phosphoserine occurs at positions 507 and 510. Residues 558–575 (SFTASPPASPPTSSVGTT) are compositionally biased toward low complexity. A compositionally biased stretch (basic and acidic residues) spans 577 to 601 (VKNEGTNHTDDLSRQDDNDPPKEYD). A Phosphoserine modification is found at S738. Positions 749-777 (EKTSRVNWSESSTAEHSSKGNSERTPSFT) are disordered. Positions 753-763 (RVNWSESSTAE) are enriched in polar residues. T773 is modified (phosphothreonine). S775 carries the post-translational modification Phosphoserine. SAM domains follow at residues 810–876 (CPVQ…LPKM) and 884–949 (YHPT…RLHD). Phosphotyrosine is present on Y901. The Nuclear localization signal motif lies at 935–938 (HRKR). A disordered region spans residues 944–989 (GDRLHDDPPQKPPRSITLREPSGNHTPPQLSPSLSQSTYTTGGSLD). Low complexity predominate over residues 969 to 984 (TPPQLSPSLSQSTYTT). S974 bears the Phosphoserine mark. Y1007 carries the post-translational modification Phosphotyrosine. A PID domain is found at 1056-1213 (IFQSCDYKAF…SFENKPSKPI (158 aa)). The disordered stretch occupies residues 1197 to 1248 (HSSTLPESFENKPSKPIPKPRVSIRKSVDLLHASHTGQEPSERHTEEALRKF). Residues 1236–1248 (PSERHTEEALRKF) show a composition bias toward basic and acidic residues.

As to quaternary structure, isoform 3 interacts with DLG4. Interacts with EPHA8. Isoform 2 interacts with COIL. Isoform 4 interacts with APP and EPHA8. Isoform 6 interacts with EPHA8. Post-translationally, isoform 3 nuclear translocation requires an NMDAR-dependent proteolytic cleavage. In terms of tissue distribution, highly expressed in marrow from patients with pre-B ALL associated with the t(1;19) translocation. Strongly expressed in brain and testis. Expressed in fetal brain. Isoform 4 is highly expressed in brain (at protein level). Isoform 6 is expressed in brain and several cancer cell lines.

Its subcellular location is the cytoplasm. The protein localises to the nucleus. It localises to the postsynaptic density. It is found in the cell projection. The protein resides in the dendritic spine. Its subcellular location is the cajal body. In terms of biological role, isoform 2 may participate in the regulation of nucleoplasmic coilin protein interactions in neuronal and transformed cells. Its function is as follows. Isoform 3 can regulate global protein synthesis by altering nucleolar numbers. Functionally, isoform 4 may play a role as a modulator of APP processing. Overexpression can down-regulate APP processing. This is Ankyrin repeat and sterile alpha motif domain-containing protein 1B (ANKS1B) from Homo sapiens (Human).